The chain runs to 400 residues: NADH-ubiquinone oxidoreductase 49 kDa subunit (400 aa).

This sequence belongs to the complex I 49 kDa subunit family.

The protein localises to the mitochondrion. It catalyses the reaction a ubiquinone + NADH + 5 H(+)(in) = a ubiquinol + NAD(+) + 4 H(+)(out). Core subunit of the mitochondrial membrane respiratory chain NADH dehydrogenase (Complex I) that is believed to belong to the minimal assembly required for catalysis. Complex I functions in the transfer of electrons from NADH to the respiratory chain. The immediate electron acceptor for the enzyme is believed to be ubiquinone. Component of the iron-sulfur (IP) fragment of the enzyme. Component of the iron-sulfur (IP) fragment of the enzyme. This is NADH-ubiquinone oxidoreductase 49 kDa subunit (NAD7) from Prototheca wickerhamii.